A 616-amino-acid chain; its full sequence is ATP-dependent zinc metalloprotease FtsH 3 (616 aa).

Topologically, residues 1 to 9 (MSKNNKKWR) are cytoplasmic. Residues 10-30 (NAGLYALLLIVVLALASAFFD) form a helical membrane-spanning segment. The Lumenal portion of the chain corresponds to 31–108 (RPTQTRETLS…VQPQSDEGFW (78 aa)). A helical transmembrane segment spans residues 109–129 (FRIASTLFLPILLLVGIFFLF). Residues 130–616 (RRAQSGPGSQ…NNNAKLALLV (487 aa)) lie on the Cytoplasmic side of the membrane. ATP is bound at residue 201 to 208 (GPPGTGKT). Histidine 423 is a binding site for Zn(2+). The active site involves glutamate 424. Zn(2+)-binding residues include histidine 427 and aspartate 504.

This sequence in the central section; belongs to the AAA ATPase family. In the C-terminal section; belongs to the peptidase M41 family. As to quaternary structure, homohexamer (Potential). Part of a large complex that includes FtsH2 and PSII. Coimmunoprecipitates with YidC. Zn(2+) serves as cofactor.

It is found in the cellular thylakoid membrane. In terms of biological role, acts as a processive, ATP-dependent zinc metallopeptidase for both cytoplasmic and membrane proteins. Plays a role in the quality control of integral membrane proteins. This Synechocystis sp. (strain ATCC 27184 / PCC 6803 / Kazusa) protein is ATP-dependent zinc metalloprotease FtsH 3.